We begin with the raw amino-acid sequence, 62 residues long: Cytotoxin 6 (62 aa).

The first 2 residues, 1–2, serve as a signal peptide directing secretion; that stretch reads YT. 4 disulfide bridges follow: cysteine 5/cysteine 23, cysteine 16/cysteine 40, cysteine 44/cysteine 55, and cysteine 56/cysteine 61.

This sequence belongs to the three-finger toxin family. Short-chain subfamily. Type IA cytotoxin sub-subfamily. In terms of assembly, monomer in solution; Homodimer and oligomer in the presence of negatively charged lipids forming a pore with a size ranging between 20 and 30 Angstroms. Expressed by the venom gland.

The protein resides in the secreted. It is found in the target cell membrane. Its function is as follows. Shows cytolytic activity on many different cells by forming pore in lipid membranes. In vivo, increases heart rate or kills the animal by cardiac arrest. In addition, it binds to heparin with high affinity, interacts with Kv channel-interacting protein 1 (KCNIP1) in a calcium-independent manner, and binds to integrin alpha-V/beta-3 (ITGAV/ITGB3) with moderate affinity. The protein is Cytotoxin 6 of Naja sputatrix (Malayan spitting cobra).